The sequence spans 616 residues: Elongation factor 4 (616 aa).

Residues 14 to 195 (SRIRNFCIIA…EVIRQVPPPV (182 aa)) enclose the tr-type G domain. Residues 26 to 31 (DHGKST) and 142 to 145 (NKID) each bind GTP.

The protein belongs to the TRAFAC class translation factor GTPase superfamily. Classic translation factor GTPase family. LepA subfamily.

Its subcellular location is the cell membrane. It catalyses the reaction GTP + H2O = GDP + phosphate + H(+). Its function is as follows. Required for accurate and efficient protein synthesis under certain stress conditions. May act as a fidelity factor of the translation reaction, by catalyzing a one-codon backward translocation of tRNAs on improperly translocated ribosomes. Back-translocation proceeds from a post-translocation (POST) complex to a pre-translocation (PRE) complex, thus giving elongation factor G a second chance to translocate the tRNAs correctly. Binds to ribosomes in a GTP-dependent manner. The protein is Elongation factor 4 of Nocardia farcinica (strain IFM 10152).